The following is a 323-amino-acid chain: Serine/threonine-protein kinase-transforming protein raf (323 aa).

Positions 24 to 284 (VMLSTRIGSG…PQILSSIELL (261 aa)) constitute a Protein kinase domain. ATP contacts are provided by residues 30–38 (IGSGSFGTV) and Lys50. The active-site Proton acceptor is the Asp143.

Belongs to the protein kinase superfamily. TKL Ser/Thr protein kinase family. RAF subfamily.

The catalysed reaction is L-seryl-[protein] + ATP = O-phospho-L-seryl-[protein] + ADP + H(+). It carries out the reaction L-threonyl-[protein] + ATP = O-phospho-L-threonyl-[protein] + ADP + H(+). In Murine sarcoma virus 3611, this protein is Serine/threonine-protein kinase-transforming protein raf (V-RAF).